The chain runs to 446 residues: Probable D-serine dehydratase (446 aa).

Residue Lys-116 is modified to N6-(pyridoxal phosphate)lysine.

This sequence belongs to the serine/threonine dehydratase family. DsdA subfamily. The cofactor is pyridoxal 5'-phosphate.

It carries out the reaction D-serine = pyruvate + NH4(+). The polypeptide is Probable D-serine dehydratase (Bacillus cereus (strain 03BB102)).